Here is a 303-residue protein sequence, read N- to C-terminus: Olfactory receptor 4X2 (303 aa).

At 1–17 (MTEFIFLVLSPNQEVQR) the chain is on the extracellular side. A helical membrane pass occupies residues 18-41 (VCFVIFLFLYTAIVLGNFLIVLTV). Topologically, residues 42-49 (MTSRSLGS) are cytoplasmic. A helical membrane pass occupies residues 50–71 (PMYFFLSYLSFMEICYSSATAP). Topologically, residues 72-92 (KLISDLLAERKVISWWGCMAQ) are extracellular. A disulfide bridge connects residues Cys-89 and Cys-181. A helical membrane pass occupies residues 93–112 (LFFLHFFGGTEIFLLTVMAY). Over 113-131 (DHYVAICKPLSYTTIMNWQ) the chain is Cytoplasmic. Residues 132–150 (VCTVLVGIAWVGGFMHSFA) form a helical membrane-spanning segment. At 151–187 (QILLIFHLLFCGPNVINHYFCDLVPLLKLACSDTFLI) the chain is on the extracellular side. The helical transmembrane segment at 188–211 (GLLIVANGGTLSVISFGVLLASYM) threads the bilayer. Residues 212 to 227 (VILLHLRTWSSEGWCK) lie on the Cytoplasmic side of the membrane. Residues 228 to 250 (ALSTCGSHFAVVILFFGPCVFNS) traverse the membrane as a helical segment. The Extracellular segment spans residues 251–261 (LRPSTTLPIDK). The chain crosses the membrane as a helical span at residues 262–281 (MVAVFYTVITAILNPVIYSL). Residues 282 to 303 (RNAEMRKAMKRLWIRTLRLNEK) lie on the Cytoplasmic side of the membrane.

The protein belongs to the G-protein coupled receptor 1 family.

Its subcellular location is the cell membrane. Odorant receptor. This Homo sapiens (Human) protein is Olfactory receptor 4X2 (OR4X2).